The chain runs to 126 residues: Holo-[acyl-carrier-protein] synthase (126 aa).

Aspartate 9 and glutamate 58 together coordinate Mg(2+).

The protein belongs to the P-Pant transferase superfamily. AcpS family. Mg(2+) serves as cofactor.

Its subcellular location is the cytoplasm. The enzyme catalyses apo-[ACP] + CoA = holo-[ACP] + adenosine 3',5'-bisphosphate + H(+). Its function is as follows. Transfers the 4'-phosphopantetheine moiety from coenzyme A to a Ser of acyl-carrier-protein. This chain is Holo-[acyl-carrier-protein] synthase, found in Escherichia coli (strain K12 / MC4100 / BW2952).